We begin with the raw amino-acid sequence, 293 residues long: ATP synthase gamma chain (293 aa).

Belongs to the ATPase gamma chain family. F-type ATPases have 2 components, CF(1) - the catalytic core - and CF(0) - the membrane proton channel. CF(1) has five subunits: alpha(3), beta(3), gamma(1), delta(1), epsilon(1). CF(0) has three main subunits: a, b and c.

It localises to the cell inner membrane. Its function is as follows. Produces ATP from ADP in the presence of a proton gradient across the membrane. The gamma chain is believed to be important in regulating ATPase activity and the flow of protons through the CF(0) complex. This chain is ATP synthase gamma chain, found in Sinorhizobium fredii (strain NBRC 101917 / NGR234).